A 269-amino-acid polypeptide reads, in one-letter code: Flagellar hook-basal body complex protein FlhP (269 aa).

Residues 7–65 adopt a coiled-coil conformation; sequence TASTTLNQLQQQIDTISSNLSNSNTTGYKAKDTNFSELVRQQFDQVDEKNEEVAKARKT.

Belongs to the flagella basal body rod proteins family.

The chain is Flagellar hook-basal body complex protein FlhP (flhP) from Bacillus subtilis (strain 168).